Reading from the N-terminus, the 885-residue chain is Alanine--tRNA ligase (885 aa).

The Zn(2+) site is built by histidine 564, histidine 568, cysteine 676, and histidine 680.

The protein belongs to the class-II aminoacyl-tRNA synthetase family. Zn(2+) serves as cofactor.

The protein localises to the cytoplasm. It catalyses the reaction tRNA(Ala) + L-alanine + ATP = L-alanyl-tRNA(Ala) + AMP + diphosphate. Catalyzes the attachment of alanine to tRNA(Ala) in a two-step reaction: alanine is first activated by ATP to form Ala-AMP and then transferred to the acceptor end of tRNA(Ala). Also edits incorrectly charged Ser-tRNA(Ala) and Gly-tRNA(Ala) via its editing domain. This is Alanine--tRNA ligase from Brucella ovis (strain ATCC 25840 / 63/290 / NCTC 10512).